The chain runs to 130 residues: Large ribosomal subunit protein bL20c (130 aa).

The protein belongs to the bacterial ribosomal protein bL20 family.

Its subcellular location is the plastid. The protein resides in the chloroplast. In terms of biological role, binds directly to 23S ribosomal RNA and is necessary for the in vitro assembly process of the 50S ribosomal subunit. It is not involved in the protein synthesizing functions of that subunit. This is Large ribosomal subunit protein bL20c from Fagopyrum esculentum subsp. ancestrale (Wild buckwheat).